A 542-amino-acid polypeptide reads, in one-letter code: MVSPRPVGLMLLLIIARVSRGAGIGFRFASYIDNYMVLQKEPSGAVIWGFGTAGATVTVTLCQGQETIMKKVTSVKGPSNTWMVVLDPMKPGGPFEVMAQQTLETTNLTLRVHDVLFGDVWLCSGQSNMQMTVLQIFNASKELSDTAAYQSVRIFSVSLTQAEEELADLDGVDLSWSKPTAGNLGHGNFTYMSAVCWLFGRYLYDTLQYPIGLVSSSWGGTPIEVWSSRRALKACGVPNTRDERVLQPEIKPMRNGCESKESSCPFRRFVPCDPVAGPATHSVLWNAMIHPLQNMTLKGVVWYQGENNANYNRDLYACMFPALIAGWRQTFHSGCQGQTERFFPFGFVQLSSYLLMNSSDYGFPEIRWHQTADFGSVPNPKMPNTFMAVAMDLCDRDSPFGSIHPRDKQTVAYRLHLGARAVAYGEKNLTFQGPLPKKIELLARNELLNLTYDQEIQVQRKDNKTFEISCCSDHQCKWLPAPVNTFSTQTLILDLSACLGTVDAVRYAWTTWPCEYKQCAVYHTSSVLPAPPFTARITHRGI.

The N-terminal stretch at 1–23 (MVSPRPVGLMLLLIIARVSRGAG) is a signal peptide. 8 N-linked (GlcNAc...) asparagine glycosylation sites follow: Asn-107, Asn-138, Asn-188, Asn-294, Asn-357, Asn-428, Asn-449, and Asn-463.

In terms of assembly, disulfide-linked heterodimer of a small subunit and a large subunit. The two subunits are derived from a single precursor by proteolytic cleavage. In terms of processing, glycosylated. Widely expressed.

The protein localises to the lysosome. It catalyses the reaction N-acetyl-9-O-acetylneuraminate + H2O = N-acetylneuraminate + acetate + H(+). The enzyme catalyses an Ac-O-9-sialoglycoconjugate + H2O = a sialoglycoconjugate + acetate + H(+). With respect to regulation, inhibited by diisopropyl fluorophosphate and diethyl-P-nitrophenyl phosphate. Catalyzes the removal of O-acetyl ester groups from position 9 of the free diacetylated sialate N-acetyl-9-O-acetylneuraminate (Neu5,9Ac2) in the cytosol and of the diacetylated sialate residues of sialylglycoconjugates in the lysosomes. Together with the sialate-O-acetyltransferase they regulate the balance of acetylated sialoglycoconjugates, key players in various processes such as cell-cell interactions, host-pathogen recognition, and tumor antigenicity. In Rattus norvegicus (Rat), this protein is Sialate O-acetylesterase (Siae).